Reading from the N-terminus, the 665-residue chain is MRGCLQVLRWLSTSPARRPVSSGLRLRSYEIVSPSILRPFTSTVRRQAQASRNVSDLEKRIAEIPIERFRNFCIVAHVDHGKSTLSDRLLELTGVIEPGSNKQVLDKLDVERERGITVKAQTCTMLYNHNGEDYLLHLIDTPGHVDFRAEVSRSYASCGGALLLVDASQGVQAQTVANFYLAFAQGLELVPVLNKVDLPSADPERALEQMRSSFELDTDNAIKVSAKTGLNVEQLLPTVIERIPAPVGDHTNALRMLLVDSWYSTYKGVILLVRVFDGEIRAGDQVVSFATGLKYYVGEVGIMYPDQTPQSVLRAGQVGYIYFNPGMKRSKEAKIGDTFTKVGYEKKVEPLPGFEEPKSMVFVAAYPSDADHFEHLEDSVNQLILNDRSITVQKESSEALGAGFRLGFLGTLHCSVFEDRLRHEHGASILITPPTVPVKVIYKDGKEVTVTNPAHFPDEDEIRAKVAELREPYVMATLTFPDEYLGKVIELCEANRGIQHTLEYFTSSQVILKYELPLGQLVEDFFGKLKGSTKGYATLDYEEAGWKASNIVKLQLLVNKKPVDAVARIVHYSQVERLGKQWVTKFKEHVDRQMFEIIIQAAVGRKVVARETIKPYRKDVLAKLHASDVSRRRKLLEKQKEGRKRLNAIGNVVIDHSAFQAFLSK.

A mitochondrion-targeting transit peptide spans 1-53 (MRGCLQVLRWLSTSPARRPVSSGLRLRSYEIVSPSILRPFTSTVRRQAQASRN). Residues 67-247 (ERFRNFCIVA…TVIERIPAPV (181 aa)) enclose the tr-type G domain. GTP contacts are provided by residues 76 to 83 (AHVDHGKS), 140 to 144 (DTPGH), and 194 to 197 (NKVD).

The protein belongs to the TRAFAC class translation factor GTPase superfamily. Classic translation factor GTPase family. LepA subfamily.

It is found in the mitochondrion inner membrane. It carries out the reaction GTP + H2O = GDP + phosphate + H(+). Its function is as follows. Promotes mitochondrial protein synthesis. May act as a fidelity factor of the translation reaction, by catalyzing a one-codon backward translocation of tRNAs on improperly translocated ribosomes. Binds to mitochondrial ribosomes in a GTP-dependent manner. This Talaromyces stipitatus (strain ATCC 10500 / CBS 375.48 / QM 6759 / NRRL 1006) (Penicillium stipitatum) protein is Translation factor guf1, mitochondrial (guf1).